The primary structure comprises 156 residues: Endogenous retrovirus group K member 18 Pro protein (156 aa).

The Peptidase A2 domain maps to 21-96; that stretch reads LEGLVDTGAD…IPLNLWGRDL (76 aa). The active site involves D26. In terms of domain architecture, G-patch spans 111–156; sequence YSPMSQKIMTKMGYIPGKGLGKNEDGIKVPIEAKINHGREGTGYPF.

Belongs to the peptidase A2 family. HERV class-II K(HML-2) subfamily. Active as a homodimer. Post-translationally, autoproteolytically processed at the N-terminus. Expected C-terminal autoprocessing not detected. The sequence shown is that of the processed Pro protein.

It catalyses the reaction Processing at the authentic HIV-1 PR recognition site and release of the mature p17 matrix and the p24 capsid protein, as a result of the cleavage of the -SQNY-|-PIVQ- cleavage site.. Retroviral proteases have roles in the processing of the primary translation products and the maturation of the viral particle. Endogenous Pro proteins may have kept, lost or modified their original function during evolution. The sequence is that of Endogenous retrovirus group K member 18 Pro protein (ERVK-18) from Homo sapiens (Human).